A 245-amino-acid polypeptide reads, in one-letter code: Ubiquinone/menaquinone biosynthesis C-methyltransferase UbiE (245 aa).

Residues Thr-71, Asp-92, and 118–119 contribute to the S-adenosyl-L-methionine site; that span reads DA.

This sequence belongs to the class I-like SAM-binding methyltransferase superfamily. MenG/UbiE family.

The catalysed reaction is a 2-demethylmenaquinol + S-adenosyl-L-methionine = a menaquinol + S-adenosyl-L-homocysteine + H(+). It carries out the reaction a 2-methoxy-6-(all-trans-polyprenyl)benzene-1,4-diol + S-adenosyl-L-methionine = a 5-methoxy-2-methyl-3-(all-trans-polyprenyl)benzene-1,4-diol + S-adenosyl-L-homocysteine + H(+). It participates in quinol/quinone metabolism; menaquinone biosynthesis; menaquinol from 1,4-dihydroxy-2-naphthoate: step 2/2. Its pathway is cofactor biosynthesis; ubiquinone biosynthesis. Functionally, methyltransferase required for the conversion of demethylmenaquinol (DMKH2) to menaquinol (MKH2) and the conversion of 2-polyprenyl-6-methoxy-1,4-benzoquinol (DDMQH2) to 2-polyprenyl-3-methyl-6-methoxy-1,4-benzoquinol (DMQH2). In Neisseria meningitidis serogroup B (strain ATCC BAA-335 / MC58), this protein is Ubiquinone/menaquinone biosynthesis C-methyltransferase UbiE.